Reading from the N-terminus, the 491-residue chain is Probable glycogen synthase 2 (491 aa).

K15 is an ADP-alpha-D-glucose binding site.

The protein belongs to the glycosyltransferase 1 family. Bacterial/plant glycogen synthase subfamily.

It carries out the reaction [(1-&gt;4)-alpha-D-glucosyl](n) + ADP-alpha-D-glucose = [(1-&gt;4)-alpha-D-glucosyl](n+1) + ADP + H(+). The protein operates within glycan biosynthesis; glycogen biosynthesis. In terms of biological role, synthesizes alpha-1,4-glucan chains using ADP-glucose. This chain is Probable glycogen synthase 2 (glgA2), found in Synechocystis sp. (strain ATCC 27184 / PCC 6803 / Kazusa).